We begin with the raw amino-acid sequence, 123 residues long: uncharacterized protein (123 aa).

A helical membrane pass occupies residues 5 to 25 (GTLVIIFAIVLILCIMLLFFY). A disordered region spans residues 33 to 54 (PGVLPPPIPPPTPPPPKKKYDH). Residues 35–47 (VLPPPIPPPTPPP) are compositionally biased toward pro residues.

This sequence belongs to the asfivirus CP123L family.

The protein resides in the host membrane. The protein localises to the virion. This is an uncharacterized protein from African swine fever virus (isolate Warthog/Namibia/Wart80/1980) (ASFV).